The primary structure comprises 265 residues: Small ribosomal subunit protein uS2 (265 aa).

Residues 231–265 are disordered; sequence VEEEYEDYEGSEEDYDYDETEYADSVIPEDGEEAE.

This sequence belongs to the universal ribosomal protein uS2 family.

This chain is Small ribosomal subunit protein uS2, found in Nostoc sp. (strain PCC 7120 / SAG 25.82 / UTEX 2576).